Reading from the N-terminus, the 227-residue chain is Ion-translocating oxidoreductase complex subunit E (227 aa).

Transmembrane regions (helical) follow at residues 34-56, 68-88, 91-111, 127-147, and 181-201; these read AINA…TIIS, IPIY…LLHA, FNLY…CIIV, FFDG…VGSI, and TIIL…LIAI.

Belongs to the NqrDE/RnfAE family. As to quaternary structure, the complex is composed of six subunits: RnfA, RnfB, RnfC, RnfD, RnfE and RnfG.

The protein localises to the cell inner membrane. Its function is as follows. Part of a membrane-bound complex that couples electron transfer with translocation of ions across the membrane. This chain is Ion-translocating oxidoreductase complex subunit E, found in Buchnera aphidicola subsp. Acyrthosiphon pisum (strain 5A).